The following is a 137-amino-acid chain: Endoribonuclease YbeY (137 aa).

Residues H103, H107, and H113 each contribute to the Zn(2+) site.

It belongs to the endoribonuclease YbeY family. Zn(2+) serves as cofactor.

The protein localises to the cytoplasm. Functionally, single strand-specific metallo-endoribonuclease involved in late-stage 70S ribosome quality control and in maturation of the 3' terminus of the 16S rRNA. The protein is Endoribonuclease YbeY of Acholeplasma laidlawii (strain PG-8A).